A 313-amino-acid polypeptide reads, in one-letter code: Malate dehydrogenase (313 aa).

Residues 11 to 16 (GSGNIG) and aspartate 35 contribute to the NAD(+) site. Arginine 84 and arginine 90 together coordinate substrate. Residues asparagine 97 and 120–122 (VTN) contribute to the NAD(+) site. The substrate site is built by asparagine 122 and arginine 153. The active-site Proton acceptor is histidine 177.

Belongs to the LDH/MDH superfamily. MDH type 3 family.

It carries out the reaction (S)-malate + NAD(+) = oxaloacetate + NADH + H(+). Catalyzes the reversible oxidation of malate to oxaloacetate. The chain is Malate dehydrogenase from Ehrlichia ruminantium (strain Welgevonden).